Consider the following 174-residue polypeptide: Gamma-crystallin E (174 aa).

Beta/gamma crystallin 'Greek key' domains follow at residues 2–40 (GKIT…RVDS) and 41–83 (GCWM…RLIP). Residues 84-87 (HSSS) form a connecting peptide region. Beta/gamma crystallin 'Greek key' domains follow at residues 88–128 (HRIR…HVME) and 129–171 (GYWV…RRIM).

This sequence belongs to the beta/gamma-crystallin family. As to expression, detected in the superior olivary complex and fibers of the ventral aoustic stria of the auditory hindbrain.

Crystallins are the dominant structural components of the vertebrate eye lens. This is Gamma-crystallin E (Cryge) from Rattus norvegicus (Rat).